We begin with the raw amino-acid sequence, 299 residues long: ATP phosphoribosyltransferase (299 aa).

This sequence belongs to the ATP phosphoribosyltransferase family. Long subfamily. It depends on Mg(2+) as a cofactor.

Its subcellular location is the cytoplasm. It catalyses the reaction 1-(5-phospho-beta-D-ribosyl)-ATP + diphosphate = 5-phospho-alpha-D-ribose 1-diphosphate + ATP. It functions in the pathway amino-acid biosynthesis; L-histidine biosynthesis; L-histidine from 5-phospho-alpha-D-ribose 1-diphosphate: step 1/9. Its activity is regulated as follows. Feedback inhibited by histidine. Catalyzes the condensation of ATP and 5-phosphoribose 1-diphosphate to form N'-(5'-phosphoribosyl)-ATP (PR-ATP). Has a crucial role in the pathway because the rate of histidine biosynthesis seems to be controlled primarily by regulation of HisG enzymatic activity. This Shewanella sp. (strain MR-7) protein is ATP phosphoribosyltransferase.